Consider the following 119-residue polypeptide: Glucitol operon activator protein (119 aa).

The segment at residues 23–29 (QISRFNR) is a DNA-binding region (H-T-H motif).

Functionally, positive regulator for glucitol operon expression. The protein is Glucitol operon activator protein (gutM) of Escherichia coli (strain K12).